A 1849-amino-acid polypeptide reads, in one-letter code: Breast cancer type 1 susceptibility protein homolog (1849 aa).

Residue Met-1 is modified to N-acetylmethionine. The RING-type zinc-finger motif lies at 24–65 (CPICLELIKEPVSTKCDHIFCKFCMLKLLNQKKGPSQCPLCK). Ser-114 carries the post-translational modification Phosphoserine. Residues Lys-301 and Lys-339 each participate in a glycyl lysine isopeptide (Lys-Gly) (interchain with G-Cter in SUMO2) cross-link. Phosphoserine occurs at positions 395, 398, 423, and 434. Residues Lys-457 and Lys-517 each participate in a glycyl lysine isopeptide (Lys-Gly) (interchain with G-Cter in SUMO2) cross-link. Basic and acidic residues predominate over residues 530–542 (KMTEGTDQTEQKC). 2 disordered regions span residues 530–558 (KMTEGTDQTEQKCHGMNITSDGHENKTKR) and 620–662 (ELEL…RQSQ). Residues Ser-691, Ser-711, and Ser-720 each carry the phosphoserine modification. Residues 882–912 (SGSLRDQSPRDPLKCRQKEDSQGKSESKSQH) form a disordered region. Residues 888-910 (QSPRDPLKCRQKEDSQGKSESKS) are compositionally biased toward basic and acidic residues. Lys-981 participates in a covalent cross-link: Glycyl lysine isopeptide (Lys-Gly) (interchain with G-Cter in SUMO2). At Ser-982 the chain carries Phosphoserine; by CHEK2. A Phosphoserine modification is found at Ser-1002. The span at 1036–1061 (NSVNEVGSSTNEVGSSVNEVGSSGEN) shows a compositional bias: low complexity. The tract at residues 1036-1070 (NSVNEVGSSTNEVGSSVNEVGSSGENIQAEPGRNR) is disordered. Lys-1073 is covalently cross-linked (Glycyl lysine isopeptide (Lys-Gly) (interchain with G-Cter in SUMO2)). Residues Ser-1138, Ser-1184, Ser-1211, Ser-1212, Ser-1274, Ser-1323, Ser-1330, Ser-1336, and Ser-1382 each carry the phosphoserine modification. Residues 1172–1211 (FSESVQKGEFRGSPGPFTHTHLAQGHQRGAGKLESEETVS) are disordered. Disordered stretches follow at residues 1321 to 1389 (YQSE…ILTT), 1412 to 1433 (VLERHGSQPSHSSASLTADSRG), and 1452 to 1493 (SEKS…RSSA). The span at 1336–1360 (SDDEERETGLEEDSCQEEQSVDSDL) shows a compositional bias: acidic residues. Composition is skewed to polar residues over residues 1370 to 1389 (ETSLSEDGVGLSSQSDILTT) and 1418 to 1429 (SQPSHSSASLTA). The residue at position 1389 (Thr-1389) is a Phosphothreonine. Positions 1392-1419 (RDTMQDNLLKLQQEMAELEAVLERHGSQ) are interaction with PALB2. Ser-1418, Ser-1452, and Ser-1518 each carry phosphoserine. 2 disordered regions span residues 1562-1590 (SLFSHEPESDPSEDRAAEPAHVHSMPPSA) and 1621-1640 (REESMSKEKPEVISSTERSK). Basic and acidic residues-rich tracts occupy residues 1566–1582 (HEPESDPSEDRAAEPAH) and 1621–1631 (REESMSKEKPE). BRCT domains are found at residues 1642-1729 (RLSM…DFEV) and 1749-1848 (RDKK…TYLV).

As to quaternary structure, heterodimer with BARD1. Part of the BRCA1-associated genome surveillance complex (BASC), which contains BRCA1, MSH2, MSH6, MLH1, ATM, BLM, PMS2 and the MRE11-RAD50-NBN protein (MRN) complex. This association could be a dynamic process changing throughout the cell cycle and within subnuclear domains. Component of the BRCA1-A complex, at least composed of BRCA1, BARD1, UIMC1/RAP80, ABRAXAS1, BRCC3/BRCC36, BABAM2 and BABAM1/NBA1. Interacts (via the BRCT domains) with ABRAXAS1 (phosphorylated form); this is important for recruitment to sites of DNA damage. Can form a heterotetramer with two molecules of ABRAXAS1 (phosphorylated form). Component of the BRCA1-RBBP8 complex. Interacts (via the BRCT domains) with RBBP8 ('Ser-327' phosphorylated form); the interaction ubiquitinates RBBP8, regulates CHEK1 activation, and involves RBBP8 in BRCA1-dependent G2/M checkpoint control on DNA damage. Associates with RNA polymerase II holoenzyme. Interacts with SMC1A, NELFB, DCLRE1C, CLSPN. CHEK1, CHEK2, BAP1, BRCC3, UBXN1 and PCLAF. Interacts (via BRCT domains) with BRIP1 (phosphorylated form). Interacts with FANCD2 (ubiquitinated form). Interacts with H2AX (phosphorylated on 'Ser-140'). Interacts (via the BRCT domains) with ACACA (phosphorylated form); the interaction prevents dephosphorylation of ACACA. Part of a BRCA complex containing BRCA1, BRCA2 and PALB2. Interacts directly with PALB2; the interaction is essential for its function in HRR. Interacts directly with BRCA2; the interaction occurs only in the presence of PALB2 which serves as the bridging protein. Interacts (via the BRCT domains) with LMO4; the interaction represses the transcriptional activity of BRCA1. Interacts (via the BRCT domains) with CCAR2 (via N-terminus); the interaction represses the transcriptional activator activity of BRCA1. Interacts with EXD2. Interacts (via C-terminus) with DHX9; this interaction is direct and links BRCA1 to the RNA polymerase II holoenzyme. Interacts with DNA helicase ZGRF1; the interaction is increased following DNA damage induction. Phosphorylated in response to IR, UV, and various stimuli that cause checkpoint activation, probably by ATM or ATR. Phosphorylation at Ser-982 by CHEK2 regulates mitotic spindle assembly. Phosphorylation by AURKA regulates centrosomal microtubule nucleation. In terms of processing, autoubiquitinated, undergoes 'Lys-6'-linked polyubiquitination. 'Lys-6'-linked polyubiquitination does not promote degradation.

The protein resides in the nucleus. Its subcellular location is the chromosome. It localises to the cytoplasm. The enzyme catalyses S-ubiquitinyl-[E2 ubiquitin-conjugating enzyme]-L-cysteine + [acceptor protein]-L-lysine = [E2 ubiquitin-conjugating enzyme]-L-cysteine + N(6)-ubiquitinyl-[acceptor protein]-L-lysine.. Its pathway is protein modification; protein ubiquitination. Functionally, E3 ubiquitin-protein ligase that specifically mediates the formation of 'Lys-6'-linked polyubiquitin chains and plays a central role in DNA repair by facilitating cellular responses to DNA damage. It is unclear whether it also mediates the formation of other types of polyubiquitin chains. The BRCA1-BARD1 heterodimer coordinates a diverse range of cellular pathways such as DNA damage repair, ubiquitination and transcriptional regulation to maintain genomic stability. Regulates centrosomal microtubule nucleation. Required for appropriate cell cycle arrests after ionizing irradiation in both the S-phase and the G2 phase of the cell cycle. Required for FANCD2 targeting to sites of DNA damage. Inhibits lipid synthesis by binding to inactive phosphorylated ACACA and preventing its dephosphorylation. Contributes to homologous recombination repair (HRR) via its direct interaction with PALB2, fine-tunes recombinational repair partly through its modulatory role in the PALB2-dependent loading of BRCA2-RAD51 repair machinery at DNA breaks. Component of the BRCA1-RBBP8 complex which regulates CHEK1 activation and controls cell cycle G2/M checkpoints on DNA damage via BRCA1-mediated ubiquitination of RBBP8. Acts as a transcriptional activator. In Bos taurus (Bovine), this protein is Breast cancer type 1 susceptibility protein homolog (BRCA1).